Reading from the N-terminus, the 385-residue chain is Tryptophan--tRNA ligase (385 aa).

Residues 82–90 (PSGPMHIGH) carry the 'HIGH' region motif. The short motif at 253–257 (KMSAS) is the 'KMSKS' region element.

Belongs to the class-I aminoacyl-tRNA synthetase family.

Its subcellular location is the cytoplasm. The catalysed reaction is tRNA(Trp) + L-tryptophan + ATP = L-tryptophyl-tRNA(Trp) + AMP + diphosphate + H(+). This Pyrococcus furiosus (strain ATCC 43587 / DSM 3638 / JCM 8422 / Vc1) protein is Tryptophan--tRNA ligase.